Here is a 724-residue protein sequence, read N- to C-terminus: NAD(+) hydrolase SARM1 (724 aa).

The N-terminal 27 residues, 1–27, are a transit peptide targeting the mitochondrion; sequence MVLTLLFSAYKLCRFFIMSGPRPGADR. An ARM 1 repeat occupies 60-100; that stretch reads EVQGALERSLPELQQALSELKQASAAQAVGAGLAEVFQLVE. NAD(+) is bound by residues W103, R110, 149 to 157, and 190 to 193; these read EQILVAENR and HMFK. ARM repeat units lie at residues 114-153, 155-193, 196-235, 237-280, 281-314, 315-354, and 359-402; these read QGLCDAIRLDGGLDLLLRLLQAPELETRVQAARLLEQILV, ENRDRVARIGLGVILNLSKEREPVELARSVAGILEHMFK, EETCQRLVAAGGLDAVLYWCRRTDPALLRHCALALANCAL, GGQT…LATN, KEVEREVEHSGTLALVEPLVASLDPGRFARCLVD, ASDTSQGRGPDDLQSLVLLLDSSRLEAQCIGAFYLCAEAA, and QGKT…EEVP. SAM domains follow at residues 412-476 and 486-548; these read WKEA…LKTF and NLAD…MLHS. 2 positions are modified to phosphoserine: S548 and S558. A TIR domain is found at 560 to 703; the sequence is DTPDVFISYR…KIIRFLQGRP (144 aa). NAD(+) contacts are provided by residues 569-570 and E599; that span reads RR. E642 is an active-site residue. Residues 703–717 are compositionally biased toward polar residues; sequence PSQDSSAGSDTSLEG. The disordered stretch occupies residues 703 to 724; that stretch reads PSQDSSAGSDTSLEGATSMGLP.

This sequence belongs to the SARM1 family. Homooctamer; forms an octameric ring via SAM domains. Interacts with TICAM1/TRIF and thereby interferes with TICAM1/TRIF function. Interacts with MAPK10/JNK3 and SDC2 (via cytoplasmic domain). Phosphorylation at Ser-548 by JNK kinases (MAPK8, MAPK9 and /or MAPK10) enhance the NAD(+) hydrolase (NADase) activity. Phosphorylation at Ser-548 and subsequent activation takes place in response to oxidative stress conditions and inhibits mitochondrial respiration. Phosphorylation at Ser-548 increases in response to cerebral ischemia/reperfusion (I/R) injury.

It is found in the cytoplasm. It localises to the cell projection. The protein resides in the axon. Its subcellular location is the dendrite. The protein localises to the synapse. It is found in the mitochondrion. It catalyses the reaction NAD(+) + H2O = ADP-D-ribose + nicotinamide + H(+). It carries out the reaction NAD(+) = cyclic ADP-beta-D-ribose + nicotinamide + H(+). The catalysed reaction is NADP(+) + H2O = ADP-D-ribose 2'-phosphate + nicotinamide + H(+). With respect to regulation, autoinhibited: in the inactive state, the enzymatic TIR domain is held apart by the autoinhibiting ARM repeats. NAD(+)-binding to ARM repeats maintains an inactive state by promoting interaction between ARM repeats and the TIR domain, thereby facilitating inhibition of the enzymatic TIR domain. Following activation, possibly by nicotinamide mononucleotide (NMN), auto-inhibitory interactions are released, allowing self-association of the TIR domains and subsequent activation of the NAD(+) hydrolase (NADase) activity. Self-association of TIR domains is facilitated by the octamer of SAM domains. Functionally, NAD(+) hydrolase, which plays a key role in axonal degeneration following injury by regulating NAD(+) metabolism. Acts as a negative regulator of MYD88- and TRIF-dependent toll-like receptor signaling pathway by promoting Wallerian degeneration, an injury-induced form of programmed subcellular death which involves degeneration of an axon distal to the injury site. Wallerian degeneration is triggered by NAD(+) depletion: in response to injury, SARM1 is activated and catalyzes cleavage of NAD(+) into ADP-D-ribose (ADPR), cyclic ADPR (cADPR) and nicotinamide; NAD(+) cleavage promoting cytoskeletal degradation and axon destruction. Also able to hydrolyze NADP(+), but not other NAD(+)-related molecules. Can activate neuronal cell death in response to stress. Regulates dendritic arborization through the MAPK4-JNK pathway. Involved in innate immune response: inhibits both TICAM1/TRIF- and MYD88-dependent activation of JUN/AP-1, TRIF-dependent activation of NF-kappa-B and IRF3, and the phosphorylation of MAPK14/p38. This is NAD(+) hydrolase SARM1 from Rattus norvegicus (Rat).